The sequence spans 412 residues: uncharacterized protein (412 aa).

Residues C62, C68, C71, and C143 each contribute to the [4Fe-4S] cluster site. Positions 243, 270, 290, and 338 each coordinate S-adenosyl-L-methionine. The active-site Nucleophile is the C364.

Belongs to the class I-like SAM-binding methyltransferase superfamily. RNA M5U methyltransferase family.

This is an uncharacterized protein from Mesorhizobium japonicum (strain LMG 29417 / CECT 9101 / MAFF 303099) (Mesorhizobium loti (strain MAFF 303099)).